Consider the following 267-residue polypeptide: U6 snRNA phosphodiesterase 1 (267 aa).

The span at 1-13 (MSSAPLVGYSSSG) shows a compositional bias: polar residues. The interval 1–74 (MSSAPLVGYS…DSAKHGGRIR (74 aa)) is disordered. The active-site Proton acceptor is His-122. Residue 122–124 (HVS) participates in AMP binding. UMP is bound by residues Gln-166, Tyr-204, and 208–212 (SFHIS). Residues Tyr-204 and 206–212 (DPSFHIS) contribute to the AMP site. The active-site Proton donor is the His-210.

Belongs to the 2H phosphoesterase superfamily. USB1 family. Interacts with PLRG1, CDC5L and PRPF19.

The protein resides in the nucleus. The catalysed reaction is a 3'-end uridylyl-uridine-RNA = a 3'-end 2',3'-cyclophospho-uridine-RNA + uridine. It carries out the reaction a 3'-end uridylyl-adenosine-RNA = a 3'-end 2',3'-cyclophospho-uridine-RNA + adenosine. In terms of biological role, 3'-5' RNA exonuclease that trims the 3' end of oligo(U) and oligo(A) tracts of the pre-U6 small nuclear RNA (snRNA) molecule, leading to the formation of a mature U6 snRNA 3' end-terminated with a 2',3'-cyclic phosphate. Participates in the U6 snRNA 3' end processing that prevents U6 snRNA degradation. In addition also removes uridines from the 3' end of U6atac snRNA and possibly the vault RNA VTRNA1-1. The polypeptide is U6 snRNA phosphodiesterase 1 (Mus musculus (Mouse)).